The primary structure comprises 369 residues: Tetraacyldisaccharide 4'-kinase (369 aa).

68–75 serves as a coordination point for ATP; it reads VVGGTGKT.

Belongs to the LpxK family.

The catalysed reaction is a lipid A disaccharide + ATP = a lipid IVA + ADP + H(+). Its pathway is glycolipid biosynthesis; lipid IV(A) biosynthesis; lipid IV(A) from (3R)-3-hydroxytetradecanoyl-[acyl-carrier-protein] and UDP-N-acetyl-alpha-D-glucosamine: step 6/6. Its function is as follows. Transfers the gamma-phosphate of ATP to the 4'-position of a tetraacyldisaccharide 1-phosphate intermediate (termed DS-1-P) to form tetraacyldisaccharide 1,4'-bis-phosphate (lipid IVA). This chain is Tetraacyldisaccharide 4'-kinase, found in Chlamydia trachomatis serovar D (strain ATCC VR-885 / DSM 19411 / UW-3/Cx).